Reading from the N-terminus, the 177-residue chain is R-phycoerythrin beta chain (177 aa).

Positions 50 and 61 each coordinate phycourobilin. Position 72 is an N4-methylasparagine (Asn-72). (2R,3E)-phycoerythrobilin is bound by residues Cys-82 and Cys-158.

The protein belongs to the phycobiliprotein family. As to quaternary structure, heterodimer of an alpha and a beta chain. Post-translationally, contains two covalently linked phycoerythrobilin chromophores and one covalently linked phycourobilin chromophore.

Its subcellular location is the plastid. The protein localises to the chloroplast thylakoid membrane. In terms of biological role, light-harvesting photosynthetic bile pigment-protein from the phycobiliprotein complex. In Pyropia haitanensis (Red seaweed), this protein is R-phycoerythrin beta chain (cpeB).